The sequence spans 80 residues: Exodeoxyribonuclease 7 small subunit (80 aa).

This sequence belongs to the XseB family. As to quaternary structure, heterooligomer composed of large and small subunits.

The protein resides in the cytoplasm. The catalysed reaction is Exonucleolytic cleavage in either 5'- to 3'- or 3'- to 5'-direction to yield nucleoside 5'-phosphates.. In terms of biological role, bidirectionally degrades single-stranded DNA into large acid-insoluble oligonucleotides, which are then degraded further into small acid-soluble oligonucleotides. The polypeptide is Exodeoxyribonuclease 7 small subunit (Rickettsia typhi (strain ATCC VR-144 / Wilmington)).